We begin with the raw amino-acid sequence, 23 residues long: Large ribosomal subunit protein uL10 (23 aa).

This sequence belongs to the universal ribosomal protein uL10 family. In terms of assembly, part of the ribosomal stalk of the 50S ribosomal subunit. The N-terminus interacts with L11 and the large rRNA to form the base of the stalk. The C-terminus forms an elongated spine to which L12 dimers bind in a sequential fashion forming a multimeric L10(L12)X complex.

Functionally, forms part of the ribosomal stalk, playing a central role in the interaction of the ribosome with GTP-bound translation factors. This is Large ribosomal subunit protein uL10 (rplJ) from Klebsiella pneumoniae.